We begin with the raw amino-acid sequence, 254 residues long: 3-deoxy-manno-octulosonate cytidylyltransferase (254 aa).

This sequence belongs to the KdsB family.

The protein localises to the cytoplasm. The catalysed reaction is 3-deoxy-alpha-D-manno-oct-2-ulosonate + CTP = CMP-3-deoxy-beta-D-manno-octulosonate + diphosphate. Its pathway is nucleotide-sugar biosynthesis; CMP-3-deoxy-D-manno-octulosonate biosynthesis; CMP-3-deoxy-D-manno-octulosonate from 3-deoxy-D-manno-octulosonate and CTP: step 1/1. It participates in bacterial outer membrane biogenesis; lipopolysaccharide biosynthesis. Activates KDO (a required 8-carbon sugar) for incorporation into bacterial lipopolysaccharide in Gram-negative bacteria. The chain is 3-deoxy-manno-octulosonate cytidylyltransferase from Chlamydia trachomatis serovar A (strain ATCC VR-571B / DSM 19440 / HAR-13).